Reading from the N-terminus, the 211-residue chain is MRSLFFGIGKSIGNFFQIVKIWRNFFMTNTRKLAYIAILSAVSFLLLYFSFPLIPAADFLKVDFSILPVLIALVIFDFKSAIGVLLLRSLLKLLLNNGGPGSMIGLPMNFVALGVFVWGLSYFWKKNQTSKNYILGSVLGTILLTVAMVVLNYIYAVPLYAKFANFDIAQFIGLYKYLFAMVVPFNLLEGLIFSVAFALIYAPLKSILVKL.

A run of 5 helical transmembrane segments spans residues 34 to 54, 66 to 86, 104 to 124, 134 to 154, and 180 to 200; these read AYIA…FPLI, ILPV…GVLL, IGLP…SYFW, ILGS…LNYI, and AMVV…FALI.

The protein belongs to the prokaryotic riboflavin transporter (P-RFT) (TC 2.A.87) family. Forms a stable energy-coupling factor (ECF) transporter complex composed of 2 membrane-embedded substrate-binding proteins (S component), 2 ATP-binding proteins (A component) and 2 transmembrane proteins (T component) upon coexpression of the 4 components in E.coli.

The protein resides in the cell membrane. Substrate-binding (S) component of an energy-coupling factor (ECF) ABC-transporter complex. Mediates riboflavin uptake, may also transport FMN and roseoflavin. Probably a riboflavin-binding protein that interacts with the energy-coupling factor (ECF) ABC-transporter complex. Unlike classic ABC transporters this ECF transporter provides the energy necessary to transport a number of different substrates. The substrates themselves are bound by transmembrane, not extracytoplasmic soluble proteins. Expression of the complex plus RibU in E.coli allows riboflavin uptake. This Streptococcus thermophilus (strain ATCC BAA-250 / LMG 18311) protein is Riboflavin transporter RibU (ribU).